Consider the following 726-residue polypeptide: Transferrin (726 aa).

Residues 1 to 16 (MLLCLTLLFSASAVLA) form the signal peptide. Transferrin-like domains lie at 29–367 (YKVC…ERDT) and 374–719 (VRFC…VIRA). 2 cysteine pairs are disulfide-bonded: C32/C63 and C41/C54. Residues D78 and Y111 each coordinate Fe(3+). Cystine bridges form between C135–C231, C184–C210, C207–C216, and C274–C287. Hydrogencarbonate is bound by residues T137, R141, V143, and G144. A glycan (N-linked (GlcNAc...) asparagine) is linked at N162. Y225 contributes to the Fe(3+) binding site. N-linked (GlcNAc...) asparagine glycans are attached at residues N337 and N358. 2 disulfide bridges follow: C377–C414 and C387–C405. The Fe(3+) site is built by D429 and Y457. Residues C481 and C562 are joined by a disulfide bond. Hydrogencarbonate-binding residues include T483, R487, A489, and G490. Fe(3+) is bound by residues Y573 and H642.

The protein belongs to the transferrin family.

Its subcellular location is the secreted. Its function is as follows. Transferrins are iron binding transport proteins which bind Fe(3+) ion in association with the binding of an anion, usually bicarbonate. This Blaberus discoidalis (Tropical cockroach) protein is Transferrin.